We begin with the raw amino-acid sequence, 463 residues long: NF-kappa-B-activating protein (463 aa).

Positions 1–14 (MRSRSRSRSRQRER) are enriched in basic residues. The segment at 1–358 (MRSRSRSRSR…GGSLNQKDFG (358 aa)) is disordered. 2 stretches are compositionally biased toward basic and acidic residues: residues 15–29 (RRSD…ERRT) and 39–71 (VSRE…DAVP). Residues 78–98 (SSPSRSSSSSSSDRSSSSRSP) are compositionally biased toward low complexity. Over residues 107-125 (KSVERWPNDRYHENNDRRQ) the composition is skewed to basic and acidic residues. 3 positions are modified to phosphoserine: serine 136, serine 189, and serine 191. At threonine 195 the chain carries Phosphothreonine. The span at 208–238 (PKKKKKKGKRKHKKSEKKSKKKSKKSKKKKS) shows a compositional bias: basic residues. The segment covering 241 to 267 (ESSSSSSSSSSEDSSDESSSSSSSSSS) has biased composition (low complexity). Positions 268–278 (DSEDESEEEDV) are enriched in acidic residues. The segment covering 279 to 288 (WLEKTADGIK) has biased composition (basic and acidic residues). The segment covering 289-312 (KPKKKKSSTSKKDKKSKKKKKKRK) has biased composition (basic residues). Basic and acidic residues predominate over residues 330–340 (KNKESASHNDE).

Belongs to the NKAP family.

The protein localises to the nucleus. In terms of biological role, tumor suppressor involved in maintaining genome integrity. Influences gene expression and mRNA splicing. This chain is NF-kappa-B-activating protein, found in Drosophila melanogaster (Fruit fly).